A 337-amino-acid polypeptide reads, in one-letter code: Methionyl-tRNA formyltransferase (337 aa).

Ser-110–Pro-113 contributes to the (6S)-5,6,7,8-tetrahydrofolate binding site.

This sequence belongs to the Fmt family.

The enzyme catalyses L-methionyl-tRNA(fMet) + (6R)-10-formyltetrahydrofolate = N-formyl-L-methionyl-tRNA(fMet) + (6S)-5,6,7,8-tetrahydrofolate + H(+). Attaches a formyl group to the free amino group of methionyl-tRNA(fMet). The formyl group appears to play a dual role in the initiator identity of N-formylmethionyl-tRNA by promoting its recognition by IF2 and preventing the misappropriation of this tRNA by the elongation apparatus. This Frankia casuarinae (strain DSM 45818 / CECT 9043 / HFP020203 / CcI3) protein is Methionyl-tRNA formyltransferase.